Here is a 224-residue protein sequence, read N- to C-terminus: BOS complex subunit TMEM147 (224 aa).

A helical transmembrane segment spans residues 1 to 21 (MTLFHFGNCFALAYFPYFITY). The Cytoplasmic portion of the chain corresponds to 22–34 (KCSGLSEYNAFWK). A helical membrane pass occupies residues 35-58 (CVQAGVTYLFVQLCKMLFLATFFP). The Lumenal portion of the chain corresponds to 59–66 (TWEGGIYD). The helical transmembrane segment at 67-88 (FIGEFMKASVDVADLIGLNLVM) threads the bilayer. Residues 89-98 (SRNAGKGEYK) lie on the Cytoplasmic side of the membrane. Residues 99–124 (IMVAALGWATAELIMSRCIPLWVGAR) form a helical membrane-spanning segment. Residues 125–129 (GIEFD) lie on the Lumenal side of the membrane. Residues 130 to 155 (WKYIQMSIDSNISLVHYIVASAQVWM) form a helical membrane-spanning segment. The Cytoplasmic portion of the chain corresponds to 156–164 (ITRYDLYHT). The chain crosses the membrane as a helical span at residues 165-187 (FRPAVLLLMFLSVYKAFVMETFV). Residues 188 to 194 (HLCSLGS) lie on the Lumenal side of the membrane. Residues 195-216 (WTALLARAVVTGLLALSTLALY) traverse the membrane as a helical segment. The Cytoplasmic segment spans residues 217–224 (VAVVNVHS).

It belongs to the TMEM147 family. In terms of assembly, component of the back of Sec61 (BOS) complex, composed of NCLN/Nicalin, NOMO1 and TMEM147. The BOS complex is part of the multi-pass translocon (MPT) complex, composed of three subcomplexes, the GEL complex (composed of RAB5IF/OPTI and TMCO1), the BOS complex (composed of NCLN/Nicalin, NOMO1 and TMEM147) and the PAT complex (composed of WDR83OS/Asterix and CCDC47). The MPT complex associates with the SEC61 complex. Interacts with CHRM3, CHRM1 and AVPR2. Interacts with LBR; promoting LBR localization to the nucleus inner membrane. Interacts with DHCR7.

Its subcellular location is the endoplasmic reticulum membrane. It is found in the nucleus membrane. It localises to the cell membrane. Functionally, component of the multi-pass translocon (MPT) complex that mediates insertion of multi-pass membrane proteins into the lipid bilayer of membranes. The MPT complex takes over after the SEC61 complex: following membrane insertion of the first few transmembrane segments of proteins by the SEC61 complex, the MPT complex occludes the lateral gate of the SEC61 complex to promote insertion of subsequent transmembrane regions. Also acts as a negative regulator of CHRM3 function, most likely by interfering with its trafficking to the cell membrane. Negatively regulates CHRM3-mediated calcium mobilization and activation of RPS6KA1/p90RSK activity. Regulates LBR localization to the nucleus inner membrane. The protein is BOS complex subunit TMEM147 of Canis lupus familiaris (Dog).